Consider the following 103-residue polypeptide: Large ribosomal subunit protein uL24 (103 aa).

The protein belongs to the universal ribosomal protein uL24 family. Part of the 50S ribosomal subunit.

In terms of biological role, one of two assembly initiator proteins, it binds directly to the 5'-end of the 23S rRNA, where it nucleates assembly of the 50S subunit. Its function is as follows. One of the proteins that surrounds the polypeptide exit tunnel on the outside of the subunit. This Oceanobacillus iheyensis (strain DSM 14371 / CIP 107618 / JCM 11309 / KCTC 3954 / HTE831) protein is Large ribosomal subunit protein uL24.